Here is a 126-residue protein sequence, read N- to C-terminus: Histone H2B type 1-C/E/G (126 aa).

Over residues 1 to 12 the composition is skewed to low complexity; sequence MPEPAKSAPAPK. The interval 1 to 36 is disordered; that stretch reads MPEPAKSAPAPKKGSKKAVTKAQKKDGKKRKRSRKE. An N-acetylproline modification is found at proline 2. Glutamate 3 is modified (ADP-ribosyl glutamic acid). An N6-(2-hydroxyisobutyryl)lysine; alternate modification is found at lysine 6. Residue lysine 6 is modified to N6-(beta-hydroxybutyryl)lysine; alternate. Lysine 6 carries the N6-acetyllysine; alternate modification. Lysine 6 carries the post-translational modification N6-butyryllysine; alternate. Position 6 is an N6-crotonyllysine; alternate (lysine 6). Residue lysine 6 is modified to N6-lactoyllysine; alternate. Residue lysine 6 forms a Glycyl lysine isopeptide (Lys-Gly) (interchain with G-Cter in SUMO2); alternate linkage. Serine 7 is modified (ADP-ribosylserine). An N6-(beta-hydroxybutyryl)lysine; alternate modification is found at lysine 12. N6-acetyllysine; alternate is present on residues lysine 12 and lysine 13. N6-crotonyllysine; alternate occurs at positions 12 and 13. Position 12 is an N6-lactoyllysine; alternate (lysine 12). Lysine 13 carries the post-translational modification N6-(2-hydroxyisobutyryl)lysine; alternate. Serine 15 carries the phosphoserine; by STK4/MST1 modification. Residues lysine 16, lysine 17, lysine 21, and lysine 24 each carry the N6-acetyllysine; alternate modification. An N6-crotonyllysine; alternate mark is found at lysine 16, lysine 17, lysine 21, and lysine 24. 4 positions are modified to N6-lactoyllysine; alternate: lysine 16, lysine 17, lysine 21, and lysine 24. At lysine 17 the chain carries N6-glutaryllysine; alternate. N6-(2-hydroxyisobutyryl)lysine; alternate occurs at positions 21 and 24. Lysine 21 is subject to N6-(beta-hydroxybutyryl)lysine; alternate. Position 21 is an N6-butyryllysine; alternate (lysine 21). Residue lysine 21 forms a Glycyl lysine isopeptide (Lys-Gly) (interchain with G-Cter in SUMO2); alternate linkage. Lysine 25 carries the post-translational modification N6-(2-hydroxyisobutyryl)lysine. Lysine 35 carries the N6-(2-hydroxyisobutyryl)lysine; alternate modification. An N6-(beta-hydroxybutyryl)lysine; alternate modification is found at lysine 35. Lysine 35 is subject to N6-crotonyllysine; alternate. Lysine 35 is subject to N6-glutaryllysine; alternate. Lysine 35 is subject to N6-succinyllysine; alternate. Lysine 35 is covalently cross-linked (Glycyl lysine isopeptide (Lys-Gly) (interchain with G-Cter in ubiquitin); alternate). Residue glutamate 36 is modified to PolyADP-ribosyl glutamic acid. Serine 37 is subject to Phosphoserine; by AMPK. 3 positions are modified to N6-(2-hydroxyisobutyryl)lysine; alternate: lysine 44, lysine 47, and lysine 58. Lysine 44 is modified (N6-lactoyllysine; alternate). An N6-glutaryllysine; alternate mark is found at lysine 44 and lysine 47. Lysine 47 is modified (N6-methyllysine; alternate). Lysine 58 bears the N6,N6-dimethyllysine; alternate mark. Residue arginine 80 is modified to Dimethylated arginine. Residue lysine 86 is modified to N6-(2-hydroxyisobutyryl)lysine; alternate. Lysine 86 is modified (N6-acetyllysine; alternate). Lysine 86 is modified (N6-lactoyllysine; alternate). Lysine 86 carries the N6,N6,N6-trimethyllysine; alternate modification. Arginine 87 and arginine 93 each carry omega-N-methylarginine. Lysine 109 carries the N6-(2-hydroxyisobutyryl)lysine; alternate modification. Lysine 109 is modified (N6-(beta-hydroxybutyryl)lysine; alternate). Position 109 is an N6-lactoyllysine; alternate (lysine 109). The residue at position 109 (lysine 109) is an N6-glutaryllysine; alternate. Lysine 109 is modified (N6-methyllysine; alternate). The O-linked (GlcNAc) serine glycan is linked to serine 113. Threonine 116 carries the phosphothreonine modification. N6-(2-hydroxyisobutyryl)lysine; alternate occurs at positions 117 and 121. N6-(beta-hydroxybutyryl)lysine; alternate is present on lysine 117. 2 positions are modified to N6-lactoyllysine; alternate: lysine 117 and lysine 121. Residues lysine 117 and lysine 121 each carry the N6-glutaryllysine; alternate modification. An N6-succinyllysine; alternate mark is found at lysine 117 and lysine 121. At lysine 117 the chain carries N6-methylated lysine; alternate. Residue lysine 121 forms a Glycyl lysine isopeptide (Lys-Gly) (interchain with G-Cter in ubiquitin); alternate linkage.

The protein belongs to the histone H2B family. As to quaternary structure, the nucleosome is a histone octamer containing two molecules each of H2A, H2B, H3 and H4 assembled in one H3-H4 heterotetramer and two H2A-H2B heterodimers. The octamer wraps approximately 147 bp of DNA. Interacts with VRK1; the interaction is mediated by the nucleosome acidic patch, a cluster of negatively charged residues of H2A and H2B forming a cleft within the nucleosome core. Monoubiquitination at Lys-35 (H2BK34Ub) by the MSL1/MSL2 dimer is required for histone H3 'Lys-4' (H3K4me) and 'Lys-79' (H3K79me) methylation and transcription activation at specific gene loci, such as HOXA9 and MEIS1 loci. Similarly, monoubiquitination at Lys-121 (H2BK120Ub) by the RNF20/40 complex gives a specific tag for epigenetic transcriptional activation and is also prerequisite for histone H3 'Lys-4' and 'Lys-79' methylation. It also functions cooperatively with the FACT dimer to stimulate elongation by RNA polymerase II. H2BK120Ub also acts as a regulator of mRNA splicing: deubiquitination by USP49 is required for efficient cotranscriptional splicing of a large set of exons. Post-translationally, phosphorylated on Ser-15 (H2BS14ph) by STK4/MST1 during apoptosis; which facilitates apoptotic chromatin condensation. Also phosphorylated on Ser-15 in response to DNA double strand breaks (DSBs), and in correlation with somatic hypermutation and immunoglobulin class-switch recombination. Phosphorylation at Ser-37 (H2BS36ph) by AMPK in response to stress promotes transcription. In terms of processing, glcNAcylation at Ser-113 promotes monoubiquitination of Lys-121. It fluctuates in response to extracellular glucose, and associates with transcribed genes. ADP-ribosylated by PARP1 or PARP2 on Ser-7 (H2BS6ADPr) in response to DNA damage. H2BS6ADPr promotes recruitment of CHD1L. Mono-ADP-ribosylated on Glu-3 (H2BE2ADPr) by PARP3 in response to single-strand breaks. Poly ADP-ribosylation on Glu-36 (H2BE35ADPr) by PARP1 regulates adipogenesis: it inhibits phosphorylation at Ser-37 (H2BS36ph), thereby blocking expression of pro-adipogenetic genes. Post-translationally, crotonylation (Kcr) is specifically present in male germ cells and marks testis-specific genes in post-meiotic cells, including X-linked genes that escape sex chromosome inactivation in haploid cells. Crotonylation marks active promoters and enhancers and confers resistance to transcriptional repressors. It is also associated with post-meiotically activated genes on autosomes. In terms of processing, hydroxybutyrylation of histones is induced by starvation. Lactylated in macrophages by EP300/P300 by using lactoyl-CoA directly derived from endogenous or exogenous lactate, leading to stimulates gene transcription.

The protein resides in the nucleus. It is found in the chromosome. Core component of nucleosome. Nucleosomes wrap and compact DNA into chromatin, limiting DNA accessibility to the cellular machineries which require DNA as a template. Histones thereby play a central role in transcription regulation, DNA repair, DNA replication and chromosomal stability. DNA accessibility is regulated via a complex set of post-translational modifications of histones, also called histone code, and nucleosome remodeling. The chain is Histone H2B type 1-C/E/G from Mus musculus (Mouse).